Here is a 320-residue protein sequence, read N- to C-terminus: Melanocyte-stimulating hormone receptor (320 aa).

Topologically, residues 1 to 40 (MPVLGPERRLLASLSSAPPAAPRLGLAANQTNQTGPQCLE) are extracellular. N32 carries an N-linked (GlcNAc...) asparagine glycan. Residues 41–66 (VSIPDGLFLSLGLVSLVENVLVVAAI) form a helical membrane-spanning segment. Residues 67–75 (AKNRNLHSP) lie on the Cytoplasmic side of the membrane. Residues 76–96 (MYYFVCCLAVSDLLVSVSNVL) traverse the membrane as a helical segment. Over 97 to 121 (ETAVLLLLEAGALAAQAAVVQQLDN) the chain is Extracellular. The helical transmembrane segment at 122–143 (VMDVLICGSMVSSLCFLGAIAV) threads the bilayer. The Cytoplasmic portion of the chain corresponds to 144-166 (DRYVSIFYALRYHSIVTLPRAGR). The chain crosses the membrane as a helical span at residues 167 to 186 (AIAAIWAGSVLSSTLFIAYY). Residues 187–194 (HHTAVLLG) are Extracellular-facing. A helical membrane pass occupies residues 195 to 214 (LVSFFVAMLALMAVLYVHML). Over 215–243 (ARACQHGRHIARLHKTQHPTRQGCGLKGA) the chain is Cytoplasmic. Residues 244 to 269 (ATLTILLGVFLLCWAPFFLHLSLVVL) form a helical membrane-spanning segment. The Extracellular segment spans residues 270–282 (CPQHPTCGCVFKN). The helical transmembrane segment at 283–303 (VNLFLALVICNSIVDPLIYAF) threads the bilayer. The Cytoplasmic portion of the chain corresponds to 304–320 (RSQELRKTLQEVLQCSW).

This sequence belongs to the G-protein coupled receptor 1 family. As to quaternary structure, interacts with MGRN1, but does not undergo MGRN1-mediated ubiquitination; this interaction competes with GNAS-binding and thus inhibits agonist-induced cAMP production. Interacts with OPN3; the interaction results in a decrease in MC1R-mediated cAMP signaling and ultimately a decrease in melanin production in melanocytes.

It localises to the cell membrane. Functionally, receptor for MSH (alpha, beta and gamma) and ACTH. The activity of this receptor is mediated by G proteins which activate adenylate cyclase. Mediates melanogenesis, the production of eumelanin (black/brown) and phaeomelanin (red/yellow), via regulation of cAMP signaling in melanocytes. In Sus scrofa (Pig), this protein is Melanocyte-stimulating hormone receptor (MC1R).